The primary structure comprises 197 residues: Recombination protein RecR (197 aa).

Residues 56–71 (CVRCFSLTDAETCNFC) form a C4-type zinc finger. In terms of domain architecture, Toprim spans 79–174 (RVLCVVETFA…RVTRIAQGLP (96 aa)).

This sequence belongs to the RecR family.

Functionally, may play a role in DNA repair. It seems to be involved in an RecBC-independent recombinational process of DNA repair. It may act with RecF and RecO. This chain is Recombination protein RecR, found in Myxococcus xanthus (strain DK1622).